We begin with the raw amino-acid sequence, 139 residues long: ATP synthase epsilon chain (139 aa).

This sequence belongs to the ATPase epsilon chain family. As to quaternary structure, F-type ATPases have 2 components, CF(1) - the catalytic core - and CF(0) - the membrane proton channel. CF(1) has five subunits: alpha(3), beta(3), gamma(1), delta(1), epsilon(1). CF(0) has three main subunits: a, b and c.

It is found in the cell membrane. Its function is as follows. Produces ATP from ADP in the presence of a proton gradient across the membrane. This chain is ATP synthase epsilon chain, found in Symbiobacterium thermophilum (strain DSM 24528 / JCM 14929 / IAM 14863 / T).